The chain runs to 452 residues: Protein CSN12 homolog (452 aa).

The PCI domain maps to 249-446 (VTFKYYEGVL…GFVVLSKSGA (198 aa)).

Belongs to the CSN12 family.

The chain is Protein CSN12 homolog (csn-8) from Neurospora crassa (strain ATCC 24698 / 74-OR23-1A / CBS 708.71 / DSM 1257 / FGSC 987).